The chain runs to 88 residues: MAHKKGASSSRNGRDSAAQRLGVKRFGGQVVKAGEIIVRQRGTHFHPGVNVGRGGDDTLFATAPGSVEFGSRRGRKTVNIVPVARPEA.

The segment at 1 to 21 is disordered; it reads MAHKKGASSSRNGRDSAAQRL.

It belongs to the bacterial ribosomal protein bL27 family.

In Mycobacterium sp. (strain MCS), this protein is Large ribosomal subunit protein bL27.